Reading from the N-terminus, the 317-residue chain is Small ribosomal subunit biogenesis GTPase RsgA (317 aa).

Residues aspartate 88 to phenylalanine 249 enclose the CP-type G domain. GTP contacts are provided by residues asparagine 136–aspartate 139 and glycine 190–threonine 198. 4 residues coordinate Zn(2+): cysteine 273, cysteine 278, histidine 280, and cysteine 286.

This sequence belongs to the TRAFAC class YlqF/YawG GTPase family. RsgA subfamily. In terms of assembly, monomer. Associates with 30S ribosomal subunit, binds 16S rRNA. It depends on Zn(2+) as a cofactor.

The protein resides in the cytoplasm. Functionally, one of several proteins that assist in the late maturation steps of the functional core of the 30S ribosomal subunit. Helps release RbfA from mature subunits. May play a role in the assembly of ribosomal proteins into the subunit. Circularly permuted GTPase that catalyzes slow GTP hydrolysis, GTPase activity is stimulated by the 30S ribosomal subunit. This Paraburkholderia phymatum (strain DSM 17167 / CIP 108236 / LMG 21445 / STM815) (Burkholderia phymatum) protein is Small ribosomal subunit biogenesis GTPase RsgA.